A 462-amino-acid chain; its full sequence is A-type ATP synthase subunit B (462 aa).

Belongs to the ATPase alpha/beta chains family. As to quaternary structure, has multiple subunits with at least A(3), B(3), C, D, E, F, H, I and proteolipid K(x).

The protein resides in the cell membrane. Its function is as follows. Component of the A-type ATP synthase that produces ATP from ADP in the presence of a proton gradient across the membrane. The B chain is a regulatory subunit. This is A-type ATP synthase subunit B from Pyrococcus abyssi (strain GE5 / Orsay).